Reading from the N-terminus, the 178-residue chain is Large ribosomal subunit protein uL6 (178 aa).

The protein belongs to the universal ribosomal protein uL6 family. Part of the 50S ribosomal subunit.

In terms of biological role, this protein binds to the 23S rRNA, and is important in its secondary structure. It is located near the subunit interface in the base of the L7/L12 stalk, and near the tRNA binding site of the peptidyltransferase center. This Thermobifida fusca (strain YX) protein is Large ribosomal subunit protein uL6.